The following is a 347-amino-acid chain: NADH-ubiquinone oxidoreductase chain 2 (347 aa).

11 consecutive transmembrane segments (helical) span residues 1–21 (MNPL…SIIL), 25–45 (HWFM…PVLM), 59–79 (YFLT…INLM), 96–116 (LLIT…FWVP), 122–142 (VSLQ…LAVM), 145–165 (IFAS…IMIG), 178–198 (IMAY…IYNP), 200–220 (LMLL…MMFM), 242–262 (VLMM…GFMP), 274–294 (NSVI…FFYM), and 325–345 (LLAP…MFIL).

The protein belongs to the complex I subunit 2 family. As to quaternary structure, core subunit of respiratory chain NADH dehydrogenase (Complex I) which is composed of 45 different subunits. Interacts with TMEM242.

Its subcellular location is the mitochondrion inner membrane. It carries out the reaction a ubiquinone + NADH + 5 H(+)(in) = a ubiquinol + NAD(+) + 4 H(+)(out). Functionally, core subunit of the mitochondrial membrane respiratory chain NADH dehydrogenase (Complex I) which catalyzes electron transfer from NADH through the respiratory chain, using ubiquinone as an electron acceptor. Essential for the catalytic activity and assembly of complex I. This Myosorex kihaulei (Kihaule's mouse shrew) protein is NADH-ubiquinone oxidoreductase chain 2.